The sequence spans 95 residues: Large ribosomal subunit protein uL23c (95 aa).

It belongs to the universal ribosomal protein uL23 family. As to quaternary structure, part of the 50S ribosomal subunit.

Its subcellular location is the plastid. It is found in the chloroplast. In terms of biological role, binds to 23S rRNA. The chain is Large ribosomal subunit protein uL23c (rpl23) from Chlamydomonas reinhardtii (Chlamydomonas smithii).